Here is a 290-residue protein sequence, read N- to C-terminus: 4-hydroxy-tetrahydrodipicolinate synthase (290 aa).

Pyruvate is bound at residue Thr44. Tyr132 (proton donor/acceptor) is an active-site residue. Residue Lys160 is the Schiff-base intermediate with substrate of the active site. Ile202 contacts pyruvate.

Belongs to the DapA family. Homotetramer; dimer of dimers.

The protein localises to the cytoplasm. It catalyses the reaction L-aspartate 4-semialdehyde + pyruvate = (2S,4S)-4-hydroxy-2,3,4,5-tetrahydrodipicolinate + H2O + H(+). It participates in amino-acid biosynthesis; L-lysine biosynthesis via DAP pathway; (S)-tetrahydrodipicolinate from L-aspartate: step 3/4. Its function is as follows. Catalyzes the condensation of (S)-aspartate-beta-semialdehyde [(S)-ASA] and pyruvate to 4-hydroxy-tetrahydrodipicolinate (HTPA). The chain is 4-hydroxy-tetrahydrodipicolinate synthase from Alkaliphilus oremlandii (strain OhILAs) (Clostridium oremlandii (strain OhILAs)).